We begin with the raw amino-acid sequence, 504 residues long: Sodium-coupled neutral amino acid symporter 2 (504 aa).

A disordered region spans residues 1 to 23; sequence MKKTEMGRFNISPDEDSSSYSSN. Residues 1–76 lie on the Cytoplasmic side of the membrane; that stretch reads MKKTEMGRFN…HPGTTSFGMS (76 aa). The tract at residues 1–96 is regulates protein turnover upon amino acid deprivation; sequence MKKTEMGRFN…SGILGLSYAM (96 aa). Residues S12, S21, S22, and S55 each carry the phosphoserine modification. The helical transmembrane segment at 77-96 threads the bilayer; that stretch reads VFNLSNAIVGSGILGLSYAM. A Na(+)-binding site is contributed by N82. The Extracellular portion of the chain corresponds to 97 to 102; that stretch reads ANTGIA. A helical transmembrane segment spans residues 103–123; the sequence is LFIILLTFVSIFSLYSVHLLL. Residues 124-158 are Cytoplasmic-facing; that stretch reads KTANEGGSLLYEQLGHKAYGLAGKLAASGSITMQN. The chain crosses the membrane as a helical span at residues 159 to 177; that stretch reads IGAMSSYLFIVKYELPLVI. Topologically, residues 178 to 188 are extracellular; the sequence is KALMNIEDTNG. A helical membrane pass occupies residues 189-209; it reads LWYLNGDYLVLLVSLVLILPL. The Cytoplasmic segment spans residues 210 to 217; that stretch reads SLLRNLGY. A helical membrane pass occupies residues 218–238; that stretch reads LGYTSGLSLLCMIFFLIVVIC. At 239–289 the chain is on the extracellular side; that stretch reads KKFQIPCPVEAALVANETVNGTFTQAALALAFNSTADDACRPRYFIFNSQT. The cysteines at positions 245 and 278 are disulfide-linked. N-linked (GlcNAc...) asparagine glycans are attached at residues N254 and N258. A helical transmembrane segment spans residues 290–310; sequence VYAVPILTFSFVCHPAVLPIY. Residues 311 to 326 are Cytoplasmic-facing; that stretch reads EELKSRSRRRMMNVSK. Residues 327-347 form a helical membrane-spanning segment; that stretch reads ISFFAMFLMYLLAALFGYLTF. At 348 to 368 the chain is on the extracellular side; the sequence is YGHVESELLHTYSEIVGTDIL. The chain crosses the membrane as a helical span at residues 369-389; it reads LLVVRLAVLVAVTLTVPVVIF. T383 lines the Na(+) pocket. Over 390–410 the chain is Cytoplasmic; it reads PIRSSVTHLLCPTKEFSWLRH. The helical transmembrane segment at 411-431 threads the bilayer; sequence SIITVTILSFTNLLVIFVPTI. The Extracellular portion of the chain corresponds to 432–433; sequence RD. A helical membrane pass occupies residues 434-454; it reads IFGFIGASAAAMLIFILPSAF. The Cytoplasmic portion of the chain corresponds to 455 to 469; that stretch reads YIKLVKKEPMRSVQK. Residues 470-492 traverse the membrane as a helical segment; the sequence is IGALCFLLSGIVVMIGSMGLIVL. Over 493-504 the chain is Extracellular; it reads DWVHDASAAGGH.

Belongs to the amino acid/polyamine transporter 2 family. In terms of processing, polyubiquitination by NEDD4L regulates the degradation and the activity of SLC38A2. Expressed in cerebral and cerebellar astrocytes and neurons.

Its subcellular location is the cell membrane. The enzyme catalyses L-alanine(in) + Na(+)(in) = L-alanine(out) + Na(+)(out). The catalysed reaction is glycine(in) + Na(+)(in) = glycine(out) + Na(+)(out). It catalyses the reaction L-serine(in) + Na(+)(in) = L-serine(out) + Na(+)(out). It carries out the reaction L-proline(in) + Na(+)(in) = L-proline(out) + Na(+)(out). The enzyme catalyses L-methionine(in) + Na(+)(in) = L-methionine(out) + Na(+)(out). The catalysed reaction is L-histidine(in) + Na(+)(in) = L-histidine(out) + Na(+)(out). It catalyses the reaction L-asparagine(in) + Na(+)(in) = L-asparagine(out) + Na(+)(out). It carries out the reaction L-glutamine(in) + Na(+)(in) = L-glutamine(out) + Na(+)(out). The enzyme catalyses L-threonine(in) + Na(+)(in) = L-threonine(out) + Na(+)(out). The catalysed reaction is L-leucine(in) + Na(+)(in) = L-leucine(out) + Na(+)(out). It catalyses the reaction L-phenylalanine(in) + Na(+)(in) = L-phenylalanine(out) + Na(+)(out). With respect to regulation, inhibited by N-methyl-D-glucamine. Inhibited by choline. Allosteric regulation of sodium ions binding by pH. Functionally, symporter that cotransports neutral amino acids and sodium ions from the extracellular to the intracellular side of the cell membrane. The transport is pH-sensitive, Li(+)-intolerant, electrogenic, driven by the Na(+) electrochemical gradient and cotransports of neutral amino acids and sodium ions with a stoichiometry of 1:1. May function in the transport of amino acids at the blood-brain barrier. May function in the transport of amino acids in the supply of maternal nutrients to the fetus through the placenta. Maintains a key metabolic glutamine/glutamate balance underpinning retrograde signaling by dendritic release of the neurotransmitter glutamate. Transports L-proline in differentiating osteoblasts for the efficient synthesis of proline-enriched proteins and provides proline essential for osteoblast differentiation and bone formation during bone development. The protein is Sodium-coupled neutral amino acid symporter 2 of Mus musculus (Mouse).